The following is a 257-amino-acid chain: UPF0246 protein Sbal195_1149 (257 aa).

Belongs to the UPF0246 family.

The protein is UPF0246 protein Sbal195_1149 of Shewanella baltica (strain OS195).